The following is a 279-amino-acid chain: Tryptophan synthase alpha chain (279 aa).

Active-site proton acceptor residues include E50 and D61.

It belongs to the TrpA family. In terms of assembly, tetramer of two alpha and two beta chains.

It carries out the reaction (1S,2R)-1-C-(indol-3-yl)glycerol 3-phosphate + L-serine = D-glyceraldehyde 3-phosphate + L-tryptophan + H2O. It functions in the pathway amino-acid biosynthesis; L-tryptophan biosynthesis; L-tryptophan from chorismate: step 5/5. The alpha subunit is responsible for the aldol cleavage of indoleglycerol phosphate to indole and glyceraldehyde 3-phosphate. In Brucella melitensis biotype 2 (strain ATCC 23457), this protein is Tryptophan synthase alpha chain.